Here is a 118-residue protein sequence, read N- to C-terminus: MASKVKQVILDLTVEKDKKNKKGGKASKQSEEESHHLEEVENKKPGGNVRRKVRRLVPNFLWAIPNRHVDHSEGGEEVGRFVGQVMEAKRKSKEQQMRPYTRFRTPEPDNHYDFCLIP.

The segment at V14–R50 is disordered. Basic and acidic residues predominate over residues K28–K44. Residues S30–A88 are interaction with SIRT2. The interaction with alpha-tubulin stretch occupies residues S30–P118. C115 contributes to the Zn(2+) binding site.

It belongs to the BEX family. Interacts with alpha-tubulin. Interacts with SIRT2. Post-translationally, ubiquitinated and degraded by the proteasome.

Its subcellular location is the cytoplasm. The protein resides in the cytoskeleton. It is found in the spindle pole. It localises to the nucleus. May play a role in microtubule deacetylation by negatively regulating the SIRT2 deacetylase activity toward alpha-tubulin and thereby participate in the control of cell cycle progression and genomic stability. In absence of reductive stress, acts as a pseudosubstrate for the CRL2(FEM1B) complex: associates with FEM1B via zinc, thereby preventing association between FEM1B and its substrates. The chain is Protein BEX4 from Rattus norvegicus (Rat).